The primary structure comprises 376 residues: Nuclear egress protein 1 (376 aa).

Ser-19 bears the Phosphoserine mark. The tract at residues 22-57 (RKRRQRELASKVASTVNGATSANNHGEPPSPADARP) is disordered. Over residues 33-45 (VASTVNGATSANN) the composition is skewed to polar residues. The CCCH-type zinc finger occupies 106-211 (CLDISPYGNE…HVIFENPDVH (106 aa)). The tract at residues 316 to 376 (VVSTNGCGPS…PLFLNSIRAP (61 aa)) is disordered. A compositionally biased stretch (polar residues) spans 317 to 332 (VSTNGCGPSSSSQSTP).

It belongs to the herpesviridae NEC1 protein family. In terms of assembly, forms a heterohexameric complex with NEC2. Interacts with capsid vertex specific component 2/CVC2; this interaction directs the capsid to the host inner nuclear membrane to initiate budding. Phosphorylated at serine residues in the N-terminus. This phosphorylation regulates the localization within the inner nuclear membrane. Phosphorylation by viral kinase UL97 at Ser-19 plays an important role for correct viral nuclear egress complex (NEC) localization.

Its subcellular location is the host nucleus inner membrane. Functionally, plays an essential role in virion nuclear egress, the first step of virion release from infected cell. Within the host nucleus, NEC1 interacts with the newly formed capsid through the vertexes and directs it to the inner nuclear membrane by associating with NEC2. Induces the budding of the capsid at the inner nuclear membrane as well as its envelopment into the perinuclear space. There, the NEC1/NEC2 complex promotes the fusion of the enveloped capsid with the outer nuclear membrane and the subsequent release of the viral capsid into the cytoplasm where it will reach the secondary budding sites in the host Golgi or trans-Golgi network. In Homo sapiens (Human), this protein is Nuclear egress protein 1.